The chain runs to 1826 residues: Transcription initiation factor TFIID subunit 1-like (1826 aa).

Disordered regions lie at residues 118 to 141, 532 to 555, and 1252 to 1276; these read DESQRHQQTMGSLQPLYHSDYDED, IPDEKEEATSNSPSKESKKESSLK, and RLKRNQEKEKLKGPPEKKPKKMKER. A compositionally biased stretch (basic and acidic residues) spans 1252 to 1268; that stretch reads RLKRNQEKEKLKGPPEK. The Nuclear localization signal signature appears at 1370 to 1377; sequence PPKKKRRV. Bromo domains lie at 1395–1503 and 1517–1626; these read RRRT…LKEK and LLDD…ITEY. The tract at residues 1648–1826 is disordered; that stretch reads AELESLDPMT…SGEHKDGHGK (179 aa). Polar residues predominate over residues 1660–1700; sequence PYTSQPPDMYDTNTSLSTSRDASVFQDESNLSVLDISTATP. Composition is skewed to acidic residues over residues 1714–1729, 1740–1750, and 1768–1783; these read EDSDVDVEGYDDEEED, GDGDLADEEEG, and EGEDDEEDAGSDEEGD. A compositionally biased stretch (polar residues) spans 1787 to 1797; it reads SAIQLSESGSD. Residues 1817 to 1826 show a composition bias toward basic and acidic residues; sequence SGEHKDGHGK.

This sequence belongs to the TAF1 family. In terms of assembly, can bind directly to TATA-box binding protein (TBP). Interacts (via bromo domains) with acetylated lysine residues on the N-terminus of histone H1.4, H2A, H2B, H3 and H4 (in vitro). As to expression, testis specific, expressed apparently in germ cells.

Its subcellular location is the nucleus. May act as a functional substitute for TAF1/TAFII250 during male meiosis, when sex chromosomes are transcriptionally silenced. This Homo sapiens (Human) protein is Transcription initiation factor TFIID subunit 1-like (TAF1L).